Here is a 572-residue protein sequence, read N- to C-terminus: NADP-dependent malic enzyme (572 aa).

At M1 the chain carries N-acetylmethionine. Residue Y102 is the Proton donor of the active site. R155 lines the NADP(+) pocket. The active-site Proton acceptor is K173. Residues E245, D246, and D269 each contribute to the a divalent metal cation site. Residues D269 and 301–318 contribute to the NADP(+) site; that span reads GAGEAALGIAHLIVMAME. The residue at position 336 (S336) is a Phosphoserine. N408 is a binding site for NADP(+).

Belongs to the malic enzymes family. In terms of assembly, homotetramer. Mg(2+) is required as a cofactor. The cofactor is Mn(2+). As to expression, ubiquitous. Up-regulated by 3,5,3'-triiodo-L-thyronine in the liver, kidney and heart.

Its subcellular location is the cytoplasm. It carries out the reaction (S)-malate + NADP(+) = pyruvate + CO2 + NADPH. The enzyme catalyses oxaloacetate + H(+) = pyruvate + CO2. In terms of biological role, catalyzes the oxidative decarboxylation of (S)-malate in the presence of NADP(+) and divalent metal ions, and decarboxylation of oxaloacetate. The chain is NADP-dependent malic enzyme (Me1) from Rattus norvegicus (Rat).